Reading from the N-terminus, the 206-residue chain is Somatotropin (206 aa).

Positions 1–18 (MLDRVVVLLSVLCLGVSS) are cleaved as a signal peptide. Q19 carries the post-translational modification Pyrrolidone carboxylic acid. H37 provides a ligand contact to Zn(2+). An intrachain disulfide couples C70 to C179. E188 contacts Zn(2+). A disulfide bond links C196 and C204.

It belongs to the somatotropin/prolactin family.

The protein localises to the secreted. Functionally, growth hormone plays an important role in growth control and is involved in the regulation of several anabolic processes. Implicated as an osmoregulatory substance important for seawater adaptation. In Pseudocaranx dentex (White trevally), this protein is Somatotropin (gh).